Here is a 257-residue protein sequence, read N- to C-terminus: RING-H2 finger protein ATL5 (257 aa).

Residues 28–48 (IMLASVIILFVAVILILCFHS) form a helical membrane-spanning segment. The RING-type; atypical zinc-finger motif lies at 113–155 (CSVCLSEFEEDDEGRVLPKCGHVFHVDCIDTWFRSRSSCPLCR). A disordered region spans residues 181 to 209 (EDTEAGSSSSSDESESSTPSSSSGSPVRF). Low complexity predominate over residues 185–206 (AGSSSSSDESESSTPSSSSGSP).

It belongs to the RING-type zinc finger family. ATL subfamily.

The protein resides in the membrane. The catalysed reaction is S-ubiquitinyl-[E2 ubiquitin-conjugating enzyme]-L-cysteine + [acceptor protein]-L-lysine = [E2 ubiquitin-conjugating enzyme]-L-cysteine + N(6)-ubiquitinyl-[acceptor protein]-L-lysine.. It participates in protein modification; protein ubiquitination. This chain is RING-H2 finger protein ATL5 (ATL5), found in Arabidopsis thaliana (Mouse-ear cress).